The chain runs to 233 residues: 6-carboxyhexanoate--CoA ligase (233 aa).

Belongs to the BioW family. Homodimer. The cofactor is Mg(2+).

The enzyme catalyses heptanedioate + ATP + CoA = 6-carboxyhexanoyl-CoA + AMP + diphosphate. The protein operates within metabolic intermediate metabolism; pimeloyl-CoA biosynthesis; pimeloyl-CoA from pimelate: step 1/1. Catalyzes the transformation of pimelate into pimeloyl-CoA with concomitant hydrolysis of ATP to AMP. The sequence is that of 6-carboxyhexanoate--CoA ligase from Methanocaldococcus sp. (strain FS406-22).